Reading from the N-terminus, the 456-residue chain is Ribosomal protein uS12 methylthiotransferase RimO (456 aa).

The MTTase N-terminal domain occupies 11-126 (PKVGFVSLGC…VMQAVHTHLP (116 aa)). 6 residues coordinate [4Fe-4S] cluster: C20, C56, C85, C157, C161, and C164. The Radical SAM core domain maps to 143–384 (LTPKHYAYLK…MEVAEEVSAR (242 aa)). The 70-residue stretch at 387–456 (QRKVGQTLRV…DGHDLWGEVA (70 aa)) folds into the TRAM domain.

This sequence belongs to the methylthiotransferase family. RimO subfamily. The cofactor is [4Fe-4S] cluster.

It is found in the cytoplasm. It catalyses the reaction L-aspartate(89)-[ribosomal protein uS12]-hydrogen + (sulfur carrier)-SH + AH2 + 2 S-adenosyl-L-methionine = 3-methylsulfanyl-L-aspartate(89)-[ribosomal protein uS12]-hydrogen + (sulfur carrier)-H + 5'-deoxyadenosine + L-methionine + A + S-adenosyl-L-homocysteine + 2 H(+). In terms of biological role, catalyzes the methylthiolation of an aspartic acid residue of ribosomal protein uS12. The sequence is that of Ribosomal protein uS12 methylthiotransferase RimO from Cupriavidus metallidurans (strain ATCC 43123 / DSM 2839 / NBRC 102507 / CH34) (Ralstonia metallidurans).